A 62-amino-acid chain; its full sequence is Protein DsrB (62 aa).

The protein belongs to the DsrB family.

The protein is Protein DsrB of Shigella boydii serotype 18 (strain CDC 3083-94 / BS512).